Reading from the N-terminus, the 229-residue chain is tRNA (guanine-N(7)-)-methyltransferase (229 aa).

S-adenosyl-L-methionine-binding residues include Glu-62, Glu-87, Asp-114, and Asp-137. The active site involves Asp-137. Residue Lys-141 participates in substrate binding. The tract at residues 143-148 (KHNKRR) is interaction with RNA. Substrate-binding positions include Asp-173 and 208 to 211 (TKFE).

The protein belongs to the class I-like SAM-binding methyltransferase superfamily. TrmB family.

The catalysed reaction is guanosine(46) in tRNA + S-adenosyl-L-methionine = N(7)-methylguanosine(46) in tRNA + S-adenosyl-L-homocysteine. It participates in tRNA modification; N(7)-methylguanine-tRNA biosynthesis. Functionally, catalyzes the formation of N(7)-methylguanine at position 46 (m7G46) in tRNA. This Francisella tularensis subsp. novicida (strain U112) protein is tRNA (guanine-N(7)-)-methyltransferase.